The chain runs to 194 residues: CASP-like protein 1D1 (194 aa).

Residues M1 to T16 show a composition bias toward basic and acidic residues. A disordered region spans residues M1–T23. At M1 to Q31 the chain is on the cytoplasmic side. The chain crosses the membrane as a helical span at residues V32–S52. Residues K53–A77 lie on the Extracellular side of the membrane. A helical transmembrane segment spans residues L78–V98. Residues T99–S109 lie on the Cytoplasmic side of the membrane. A helical transmembrane segment spans residues A110–A130. At T131–H163 the chain is on the extracellular side. The chain crosses the membrane as a helical span at residues V164 to I184. Over S185–R194 the chain is Cytoplasmic.

Belongs to the Casparian strip membrane proteins (CASP) family. As to quaternary structure, homodimer and heterodimers.

The protein resides in the cell membrane. The sequence is that of CASP-like protein 1D1 from Arabidopsis lyrata subsp. lyrata (Lyre-leaved rock-cress).